Reading from the N-terminus, the 333-residue chain is Protein VTE6, chloroplastic (333 aa).

The N-terminal 65 residues, 1-65 (MATISSTLLL…SRADGATAAA (65 aa)), are a transit peptide targeting the chloroplast. A run of 6 helical transmembrane segments spans residues 94-114 (LLIF…SGIA), 126-146 (AYGS…TAAT), 171-191 (VIGS…QVGG), 248-268 (TLAG…LGQI), 274-294 (AVCV…GASF), and 307-327 (VVNV…QQFI).

The protein belongs to the TMEM19 family.

Its subcellular location is the plastid. The protein resides in the chloroplast membrane. The catalysed reaction is phytyl phosphate + a ribonucleoside 5'-triphosphate = phytyl diphosphate + a ribonucleoside 5'-diphosphate. It catalyses the reaction phytyl phosphate + CTP = phytyl diphosphate + CDP. The protein operates within cofactor biosynthesis; tocopherol biosynthesis. In terms of biological role, phytyl-phosphate kinase catalyzing the conversion of phytyl-monophosphate to phytyl-diphosphate. Involved in the activation and reutilization of phytol from chlorophyll degradation in plant metabolism, including tocopherol (vitamin E) biosynthesis. Involved in the biosynthesis of phylloquinone (vitamin K), which is required for the photosystem I (PSI) complex stability. The polypeptide is Protein VTE6, chloroplastic (Arabidopsis thaliana (Mouse-ear cress)).